Reading from the N-terminus, the 254-residue chain is Isoprenyl transferase (254 aa).

Aspartate 23 is an active-site residue. Aspartate 23 lines the Mg(2+) pocket. Residues 24–27 (GNGR), tryptophan 28, arginine 36, histidine 40, and 68–70 (STE) each bind substrate. The active-site Proton acceptor is asparagine 71. Residues tryptophan 72, arginine 74, arginine 191, and 197–199 (RIS) each bind substrate. Glutamate 210 contacts Mg(2+).

The protein belongs to the UPP synthase family. In terms of assembly, homodimer. The cofactor is Mg(2+).

Functionally, catalyzes the condensation of isopentenyl diphosphate (IPP) with allylic pyrophosphates generating different type of terpenoids. The polypeptide is Isoprenyl transferase (Porphyromonas gingivalis (strain ATCC BAA-308 / W83)).